A 346-amino-acid polypeptide reads, in one-letter code: Phenylalanine--tRNA ligase alpha subunit (346 aa).

Mg(2+) is bound at residue Glu-261.

It belongs to the class-II aminoacyl-tRNA synthetase family. Phe-tRNA synthetase alpha subunit type 1 subfamily. In terms of assembly, tetramer of two alpha and two beta subunits. It depends on Mg(2+) as a cofactor.

It localises to the cytoplasm. It catalyses the reaction tRNA(Phe) + L-phenylalanine + ATP = L-phenylalanyl-tRNA(Phe) + AMP + diphosphate + H(+). The sequence is that of Phenylalanine--tRNA ligase alpha subunit from Dehalococcoides mccartyi (strain ATCC BAA-2100 / JCM 16839 / KCTC 5957 / BAV1).